The primary structure comprises 578 residues: MPRGLELLIAQTILQGFDAQYGRFLEVTSGAQQRFEQADWHAVQQAMKNRIHLYDHHVGLVVEQLRCITNGQSTDAAFLLRVKEHYTRLLPDYPRFEIAESFFNSVYCRLFDHRSLTPERLFIFSSQPERRFRTIPRPLAKDFHPDHGWESLLMRVISDLPLRLRWQNKSRDIHYIIRHLTETLGTDNLAESHLQVANELFYRNKAAWLVGKLITPSGTLPFLLPIHQTDDGELFIDTCLTTTAEASIVFGFARSYFMVYAPLPAALVEWLREILPGKTTAELYMAIGCQKHAKTESYREYLVYLQGCNEQFIEAPGIRGMVMLVFTLPGFDRVFKVIKDRFAPQKEMSAAHVRACYQLVKEHDRVGRMADTQEFENFVLEKRHISPALMELLLQEAAEKITDLGEQIVIRHLYIERRMVPLNIWLEQVEGQQLRDAIEEYGNAIRQLAAANIFPGDMLFKNFGVTRHGRVVFYDYDEICYMTEVNFRDIPPPRYPEDELASEPWYSVSPGDVFPEEFRHWLCADPRIGPLFEEMHADLFRADYWRALQNRIREGHVEDVYAYRRRQRFSVRYGEMLF.

Residues 315-321 (APGIRGM) and Lys336 contribute to the ATP site. Residue Asp371 is part of the active site.

Belongs to the AceK family.

The protein localises to the cytoplasm. The catalysed reaction is L-seryl-[isocitrate dehydrogenase] + ATP = O-phospho-L-seryl-[isocitrate dehydrogenase] + ADP + H(+). Its function is as follows. Bifunctional enzyme which can phosphorylate or dephosphorylate isocitrate dehydrogenase (IDH) on a specific serine residue. This is a regulatory mechanism which enables bacteria to bypass the Krebs cycle via the glyoxylate shunt in response to the source of carbon. When bacteria are grown on glucose, IDH is fully active and unphosphorylated, but when grown on acetate or ethanol, the activity of IDH declines drastically concomitant with its phosphorylation. In Escherichia coli (strain K12 / MC4100 / BW2952), this protein is Isocitrate dehydrogenase kinase/phosphatase.